The primary structure comprises 1693 residues: Putative stoned B-like protein (1693 aa).

The segment covering 1–12 (MSWRDRDFDPHG) has biased composition (basic and acidic residues). Disordered stretches follow at residues 1 to 54 (MSWR…ELPA), 222 to 322 (NQIP…VEKS), 334 to 371 (TVEI…PTFS), 383 to 438 (KEMT…DPNA), 585 to 807 (GDYH…TSAA), 841 to 869 (KKME…DEED), and 899 to 1024 (PVKE…FVAD). The segment covering 26–39 (SSSERAASMRAMRS) has biased composition (low complexity). Composition is skewed to basic and acidic residues over residues 279–301 (MEDK…KEET) and 311–322 (TTEKHQNEVEKS). A compositionally biased stretch (acidic residues) spans 360–371 (EEEEDDDLPTFS). Positions 393–412 (ENVENEKQEDTHISEGHVEY) are enriched in basic and acidic residues. Residues 596–615 (DENSTSAISGYEQNGASTSL) are compositionally biased toward polar residues. The segment covering 632–643 (YYQGQEYQQEYY) has biased composition (low complexity). Residues 684–686 (DPF) carry the DPF 1 motif. The span at 708–722 (SPTPEASSSTGTSAP) shows a compositional bias: low complexity. Residues 745–760 (PPRPPPAARPPPPRPA) show a composition bias toward pro residues. The segment covering 786 to 807 (KVSTAVKSTESTLKNLEETSAA) has biased composition (polar residues). Residues 899–913 (PVKEIKKAPEIRRVD) are compositionally biased toward basic and acidic residues. Short sequence motifs (DPF) lie at residues 1006 to 1008 (DPF), 1024 to 1026 (DPF), and 1039 to 1041 (DPF). Residues 1062–1095 (ANAENEDDFYNGRQSPTLSTPTPEGGSPISQQRP) form a disordered region. Residues 1073-1095 (GRQSPTLSTPTPEGGSPISQQRP) show a composition bias toward polar residues. In terms of domain architecture, SHD spans 1136 to 1283 (GWDLMVRHPI…KCKITRTAKP (148 aa)). The MHD domain maps to 1287–1606 (QDEVQIHCYD…AKYQYKVEID (320 aa)). Positions 1633 to 1693 (ELHQPTFNPS…IQIDMKNYGY (61 aa)) are disordered. The span at 1637 to 1651 (PTFNPSTQESDTQQG) shows a compositional bias: polar residues.

The protein belongs to the Stoned B family.

It localises to the cytoplasm. Its function is as follows. Potential adapter protein, which may be involved in endocytic vesicle recycling of synaptic vesicles. This Caenorhabditis elegans protein is Putative stoned B-like protein (unc-41).